A 338-amino-acid polypeptide reads, in one-letter code: Heat-inducible transcription repressor HrcA (338 aa).

It belongs to the HrcA family.

Functionally, negative regulator of class I heat shock genes (grpE-dnaK-dnaJ and groELS operons). Prevents heat-shock induction of these operons. This chain is Heat-inducible transcription repressor HrcA, found in Bacillus thuringiensis (strain Al Hakam).